Consider the following 193-residue polypeptide: Xanthine phosphoribosyltransferase (193 aa).

Positions 20 and 27 each coordinate xanthine. 5-phospho-alpha-D-ribose 1-diphosphate is bound at residue 128–132; the sequence is ANGQA. Lys-156 contacts xanthine.

It belongs to the purine/pyrimidine phosphoribosyltransferase family. Xpt subfamily. As to quaternary structure, homodimer.

The protein localises to the cytoplasm. The catalysed reaction is XMP + diphosphate = xanthine + 5-phospho-alpha-D-ribose 1-diphosphate. It functions in the pathway purine metabolism; XMP biosynthesis via salvage pathway; XMP from xanthine: step 1/1. In terms of biological role, converts the preformed base xanthine, a product of nucleic acid breakdown, to xanthosine 5'-monophosphate (XMP), so it can be reused for RNA or DNA synthesis. This chain is Xanthine phosphoribosyltransferase, found in Streptococcus pneumoniae serotype 2 (strain D39 / NCTC 7466).